A 466-amino-acid chain; its full sequence is Transcription factor SOX-10 (466 aa).

Disordered stretches follow at residues 1–67 (MAEE…DDDK), 160–200 (LRMQ…QGGA), 213–275 (DHRH…DFGN), 344–375 (TVSP…QPST), and 433–466 (RPLY…LSRP). Residues 23 to 32 (LSPGSAPSLG) show a composition bias toward low complexity. S24 is modified (phosphoserine). The dimerization (DIM) stretch occupies residues 62-102 (EADDDKFPVCIREAVSQVLSGYDWTLVPMPVRVNGASKSKP). The segment at residues 104-172 (VKRPMNAFMV…QHKKDHPDYK (69 aa)) is a DNA-binding region (HMG box). Over residues 160 to 173 (LRMQHKKDHPDYKY) the composition is skewed to basic and acidic residues. The span at 183 to 200 (AAQGEAECPGGEAEQGGA) shows a compositional bias: low complexity. A transactivation domain (TAM) region spans residues 228 to 310 (PEHPSGQSHG…LPPNGHPGHV (83 aa)). Over residues 254–271 (ADPKRDGRSLGEGGKPHI) the composition is skewed to basic and acidic residues. The transactivation domain (TAC) stretch occupies residues 353-466 (KAQVKTETTG…QPVYTTLSRP (114 aa)). A compositionally biased stretch (polar residues) spans 440-466 (SDPSPSGPQSHSPTHWEQPVYTTLSRP).

As to quaternary structure, monomer. Interacts with Armcx3 at the mitochondrial outer membrane surface. Interacts with PAX3. Expressed in oligodendroglia of the spinal tube (at protein level).

It localises to the cytoplasm. Its subcellular location is the nucleus. The protein localises to the mitochondrion outer membrane. Transcription factor that plays a central role in developing and mature glia. Specifically activates expression of myelin genes, during oligodendrocyte (OL) maturation, such as DUSP15 and MYRF, thereby playing a central role in oligodendrocyte maturation and CNS myelination. Once induced, MYRF cooperates with SOX10 to implement the myelination program. Transcriptional activator of MITF, acting synergistically with PAX3. Transcriptional activator of MBP, via binding to the gene promoter. In Mus musculus (Mouse), this protein is Transcription factor SOX-10 (Sox10).